Consider the following 609-residue polypeptide: Zinc metalloproteinase-disintegrin-like VMP-III (609 aa).

The first 20 residues, 1–20 (MIQVLLVTICLAAFPYQGSS), serve as a signal peptide directing secretion. The propeptide occupies 21-189 (IILESGNVND…KKASQLVVTA (169 aa)). Positions 198–393 (RFVELFLVVD…HNPECILNEP (196 aa)) constitute a Peptidase M12B domain. Glutamate 201 and aspartate 285 together coordinate Ca(2+). Intrachain disulfides connect cysteine 308-cysteine 388, cysteine 348-cysteine 372, and cysteine 350-cysteine 355. Histidine 333 contributes to the Zn(2+) binding site. Glutamate 334 is a catalytic residue. 2 residues coordinate Zn(2+): histidine 337 and histidine 343. An N-linked (GlcNAc...) asparagine glycan is attached at asparagine 371. Ca(2+)-binding residues include cysteine 388, asparagine 391, valine 403, asparagine 406, leucine 408, glutamate 410, glutamate 413, and aspartate 416. Residues 401 to 487 (PPVCGNELLE…ECPADVFHKN (87 aa)) enclose the Disintegrin domain. 14 cysteine pairs are disulfide-bonded: cysteine 404–cysteine 433, cysteine 415–cysteine 428, cysteine 417–cysteine 423, cysteine 427–cysteine 450, cysteine 441–cysteine 447, cysteine 446–cysteine 472, cysteine 459–cysteine 479, cysteine 466–cysteine 498, cysteine 491–cysteine 503, cysteine 510–cysteine 560, cysteine 525–cysteine 571, cysteine 538–cysteine 548, cysteine 555–cysteine 597, and cysteine 591–cysteine 602. The D/ECD-tripeptide signature appears at 465–467 (ECD). 5 residues coordinate Ca(2+): aspartate 467, proline 468, glutamate 470, aspartate 482, and valine 483.

Belongs to the venom metalloproteinase (M12B) family. P-III subfamily. P-IIIa sub-subfamily. As to quaternary structure, monomer. It depends on Zn(2+) as a cofactor. In terms of tissue distribution, expressed by the venom gland.

It localises to the secreted. Snake venom metalloproteinase that impairs hemostasis in the envenomed animal. The polypeptide is Zinc metalloproteinase-disintegrin-like VMP-III (Crotalus viridis viridis (Prairie rattlesnake)).